A 653-amino-acid chain; its full sequence is MRHFKITSEFDAAGDQPEAIRKLSEGIERGVREQVLLGVTGSGKTFTMASVIEKRQCPALIVAHNKTLAAQLYEEMRMFFPNNAVEYFVSYYDYYQPEAYIPHSDVYIEKDALINEKIDMLRHSATRSILERRDVIVVASVSCIYGLGSPELYSEMTIPLSIGMQIDLCQLKEKLVELQYKSGSQCERGTFSVKGDIVTIFPSHHEDHVWRISMFGDVIESIQEVDNNLGIAVANLEKVKVFPNSHYVTPRPTLMQALSRIEEELQECVINYRKNNKIIEAERILERTKFDIEMMKETGTCKGIENYSRYLCGKAAGEPPNTLLDYLPVDSLMFIDESHITIPQIRSMYNGDRVRKANLITHGFRLPSALDNRPLTFEEWESRKTTLVYVSATPGKYETERTSGVVVEQLIRPTGLVDPICIVKKASGQIADVVNESQATISEGYRVLVTALTKKMAENLSEHMREIGIKVAYLHSDVKTLERMDIIAQLRTGEIDVLIGVNLLREGLDIPECALVCILDADKEGFLRSETSLVQTIGRAARNMNGRVILYADRVTKSMKAAIDETNRRRAVQESYNKAHGITPKSISKSVATSLKDRITVKGTKGSKSKSAAVTEEDIIKLQKEMLLHAENLEFEKALEIRNQINKLSQHKT.

The region spanning glutamate 25 to serine 182 is the Helicase ATP-binding domain. Glycine 38 to threonine 45 contributes to the ATP binding site. The Beta-hairpin signature appears at tyrosine 91–isoleucine 114. One can recognise a Helicase C-terminal domain in the interval glutamine 429 to valine 591. Residues glutamate 616–histidine 651 form the UVR domain.

This sequence belongs to the UvrB family. In terms of assembly, forms a heterotetramer with UvrA during the search for lesions. Interacts with UvrC in an incision complex.

It localises to the cytoplasm. Functionally, the UvrABC repair system catalyzes the recognition and processing of DNA lesions. A damage recognition complex composed of 2 UvrA and 2 UvrB subunits scans DNA for abnormalities. Upon binding of the UvrA(2)B(2) complex to a putative damaged site, the DNA wraps around one UvrB monomer. DNA wrap is dependent on ATP binding by UvrB and probably causes local melting of the DNA helix, facilitating insertion of UvrB beta-hairpin between the DNA strands. Then UvrB probes one DNA strand for the presence of a lesion. If a lesion is found the UvrA subunits dissociate and the UvrB-DNA preincision complex is formed. This complex is subsequently bound by UvrC and the second UvrB is released. If no lesion is found, the DNA wraps around the other UvrB subunit that will check the other stand for damage. This chain is UvrABC system protein B, found in Anaplasma phagocytophilum (strain HZ).